A 558-amino-acid chain; its full sequence is MEIILFLTMMVMIAYVFSGYLYRVALVQSSRVDLIFTRFENMCFKIIGTDLEHMSAKTYVKHFLAFNGFMGVITFVLLIVQQWLFLNPNHNLNQSIDLAFNTAISFLTNSNLQHYNGESGVTYLTQMIVMTYLMFTSSASGYAVCIAMLRRLTGLTNIIGNFYQDIVRFIVRVLLPLSCLISILLMTQGVPQTLHANLMIRTLSGHIQHIAFGPIASLESIKHLGTNGGGFLAGNSATPFENPNIWSNFIEMGSMMLLPMSMLFLFGRMLSRHGKRVHRHALILFVAMFFIFIAILTLTMWSEYRGNPILANLGIHGANMEGKEVRFGAGLSALFTVITTAFTTGSVNNMHDSLTPLGGLGPMVLMMLNVVFGGEGVGLMNLLIYVLLTLFICSLMVGKTPEYLNMPIGAREMKCIVLVFLIHPILILVFSALAFMIPGASESITNPSFHGISQVMYEMTSAAANNGSGFEGLKDDTTFWNISTGIIMLLSRYIPIILQLMISSSLVNKKSYHQDKHTIAIDKPYFGVSLIVFIVLLSGLTFIPVLLLGPIGEFLTLK.

12 consecutive transmembrane segments (helical) span residues 1–21 (MEII…SGYL), 66–86 (FNGF…WLFL), 127–147 (MIVM…VCIA), 166–186 (IVRF…ILLM), 245–265 (IWSN…MLFL), 281–301 (ALIL…LTMW), 327–347 (FGAG…TGSV), 354–374 (LTPL…VFGG), 377–397 (VGLM…SLMV), 416–436 (IVLV…LAFM), 482–502 (ISTG…QLMI), and 531–551 (IVFI…LGPI).

It belongs to the KdpA family. As to quaternary structure, the system is composed of three essential subunits: KdpA, KdpB and KdpC.

It localises to the cell membrane. Functionally, part of the high-affinity ATP-driven potassium transport (or Kdp) system, which catalyzes the hydrolysis of ATP coupled with the electrogenic transport of potassium into the cytoplasm. This subunit binds the extracellular potassium ions and delivers the ions to the membrane domain of KdpB through an intramembrane tunnel. The chain is Potassium-transporting ATPase potassium-binding subunit 1 from Staphylococcus aureus (strain MRSA252).